Here is a 245-residue protein sequence, read N- to C-terminus: E3 ubiquitin-protein ligase RNF138 (245 aa).

Residue Ala2 is modified to N-acetylalanine. The RING-type zinc-finger motif lies at 18–58 (CPVCQEVLKTPVRTAACQHVFCRKCFLTAMRESGIHCPLCR). 4 residues coordinate Zn(2+): Cys86, Cys89, His101, and Cys105. The C2HC RNF-type zinc-finger motif lies at 86 to 105 (CRCCAKQIKFYRMRHHYKSC). Residues 128–153 (VGNSNRSETSASDNIETYQENTGSSG) are disordered. C2H2-type zinc fingers lie at residues 157–180 (FKCP…NSNH) and 187–215 (VTCP…NQRH). The 19-residue stretch at 225–243 (LQLDEETQYQTAVEESFQV) folds into the UIM domain.

Interacts with NLK. Interacts with XRCC5/Ku80. Interacts with RBBP8/CtIP. Post-translationally, auto-ubiquitinated.

Its subcellular location is the chromosome. The catalysed reaction is S-ubiquitinyl-[E2 ubiquitin-conjugating enzyme]-L-cysteine + [acceptor protein]-L-lysine = [E2 ubiquitin-conjugating enzyme]-L-cysteine + N(6)-ubiquitinyl-[acceptor protein]-L-lysine.. It participates in protein modification; protein ubiquitination. Functionally, E3 ubiquitin-protein ligase involved in DNA damage response by promoting DNA resection and homologous recombination. Recruited to sites of double-strand breaks following DNA damage and specifically promotes double-strand break repair via homologous recombination. Two different, non-exclusive, mechanisms have been proposed. According to a report, regulates the choice of double-strand break repair by favoring homologous recombination over non-homologous end joining (NHEJ): acts by mediating ubiquitination of XRCC5/Ku80, leading to remove the Ku complex from DNA breaks, thereby promoting homologous recombination. According to another report, cooperates with UBE2Ds E2 ubiquitin ligases (UBE2D1, UBE2D2, UBE2D3 or UBE2D4) to promote homologous recombination by mediating ubiquitination of RBBP8/CtIP. Together with NLK, involved in the ubiquitination and degradation of TCF/LEF. Also exhibits auto-ubiquitination activity in combination with UBE2K. May act as a negative regulator in the Wnt/beta-catenin-mediated signaling pathway. This chain is E3 ubiquitin-protein ligase RNF138 (RNF138), found in Bos taurus (Bovine).